A 702-amino-acid chain; its full sequence is Threonine--tRNA ligase (702 aa).

Positions Met-1–Pro-30 are disordered. Residues Asp-15 to Pro-84 enclose the TGS domain. The catalytic stretch occupies residues Asp-279–Pro-585. Zn(2+)-binding residues include Cys-384, His-435, and His-562.

It belongs to the class-II aminoacyl-tRNA synthetase family. In terms of assembly, homodimer. Zn(2+) serves as cofactor.

Its subcellular location is the cytoplasm. It carries out the reaction tRNA(Thr) + L-threonine + ATP = L-threonyl-tRNA(Thr) + AMP + diphosphate + H(+). Catalyzes the attachment of threonine to tRNA(Thr) in a two-step reaction: L-threonine is first activated by ATP to form Thr-AMP and then transferred to the acceptor end of tRNA(Thr). Also edits incorrectly charged L-seryl-tRNA(Thr). This is Threonine--tRNA ligase from Mycobacterium leprae (strain Br4923).